The following is a 694-amino-acid chain: Inactive protein-arginine deiminase type-6 (694 aa).

A phosphoserine mark is found at Ser-10 and Ser-446.

The protein belongs to the protein arginine deiminase family. In terms of assembly, homodimers. Associates with alpha-tubulin. In terms of processing, phosphorylation at Ser-10, possibly by RSK-type kinases, and Ser-446 creates binding sites for 14-3-3 proteins. As to expression, highly expressed in oocytes and weakly expressed in other somatic tissues.

Its subcellular location is the cytoplasm. The protein localises to the cytoplasmic vesicle. It localises to the secretory vesicle. It is found in the cortical granule. The protein resides in the nucleus. Structural constituent of cytoplasmic lattices, which plays a key role in early embryonic development. Cytoplasmic lattices consist in fibrous structures found in the cytoplasm of oocytes and preimplantation embryos. They are required to store maternal proteins critical for embryonic development, such as ribosomal proteins and proteins that control epigenetic reprogramming of the preimplantation embryo, and prevent their degradation or activation. In contrast to other members of the family, does not show protein-arginine deiminase activity due to its inability to bind Ca(2+). This is Inactive protein-arginine deiminase type-6 from Homo sapiens (Human).